The chain runs to 480 residues: Aspartyl/glutamyl-tRNA(Asn/Gln) amidotransferase subunit B (480 aa).

This sequence belongs to the GatB/GatE family. GatB subfamily. In terms of assembly, heterotrimer of A, B and C subunits.

It carries out the reaction L-glutamyl-tRNA(Gln) + L-glutamine + ATP + H2O = L-glutaminyl-tRNA(Gln) + L-glutamate + ADP + phosphate + H(+). It catalyses the reaction L-aspartyl-tRNA(Asn) + L-glutamine + ATP + H2O = L-asparaginyl-tRNA(Asn) + L-glutamate + ADP + phosphate + 2 H(+). Allows the formation of correctly charged Asn-tRNA(Asn) or Gln-tRNA(Gln) through the transamidation of misacylated Asp-tRNA(Asn) or Glu-tRNA(Gln) in organisms which lack either or both of asparaginyl-tRNA or glutaminyl-tRNA synthetases. The reaction takes place in the presence of glutamine and ATP through an activated phospho-Asp-tRNA(Asn) or phospho-Glu-tRNA(Gln). This is Aspartyl/glutamyl-tRNA(Asn/Gln) amidotransferase subunit B from Streptococcus pneumoniae (strain Hungary19A-6).